A 655-amino-acid chain; its full sequence is MRQATELDQSIHCASAANLDLVQFAAELCELLVEENFGELFGRIFATLSRYDRLNLPRLKAYSELPNRQLLPALAAMIQQHLVYHYTSYDDGVTYYEANMQSAYYLVRSGKILEFVEERLGKYAATVLSTIMNLGHAQVSYLETLPELTSEAVKANGVSEEHGEHEEGEEQSNGLNGEHSNEQPELLHPTLKALAAHGYIIRVREAQFQSHADNILDAERVIRSKPEMKALKGKRLEEAVIEGTLGLLKERTDGDLTRGLIVHGVPRGAKRKYSSRRADEPNKKPRTDFASVDEIDEQDEEEENEWLDDEMGYDTTPMESGLVVRVNYNKLDVALRNRRFIELAEQGVSPETAEVYECLLRRIEYQTHQCRDTAEIPREGEEGEQYSVPIALSALAEDVDPRLDLSSSTGPMDTSQPDGRRGKRPLESDVDGTNHEGANGLSSGGNRTFEIDQHLSLLAQPPHNLTSKRMVSGLITWTVEFRHLARKLRHLELERMIEARYGDVALRVVRVLHAKGKLDEKRLQEISLLPFKDLRQVLASMQAGGFVDLQEVPRDAQRQPSRTIYLWYYDPDRICNSVLQDTYKAMSRCLQRLRFERSRIKDFLEKTERSDVKGNEQRFLSEPELVLLEQWRAKEALLLGEVARLDEMVAVMRDY.

3 disordered regions span residues 153 to 183 (VKANGVSEEHGEHEEGEEQSNGLNGEHSNEQ), 270 to 305 (KRKYSSRRADEPNKKPRTDFASVDEIDEQDEEEENE), and 402 to 445 (RLDL…SSGG). The segment covering 276-287 (RRADEPNKKPRT) has biased composition (basic and acidic residues). Positions 291 to 305 (SVDEIDEQDEEEENE) are enriched in acidic residues. A compositionally biased stretch (polar residues) spans 405 to 417 (LSSSTGPMDTSQP). Basic and acidic residues predominate over residues 418 to 427 (DGRRGKRPLE). Positions 582-603 (TYKAMSRCLQRLRFERSRIKDF) are leucine-zipper.

It belongs to the RNA polymerase beta chain family. In terms of assembly, component of the RNA polymerase III (Pol III) complex consisting of 17 subunits.

It is found in the nucleus. DNA-dependent RNA polymerase catalyzes the transcription of DNA into RNA using the four ribonucleoside triphosphates as substrates. Specific core component of RNA polymerase III which synthesizes small RNAs, such as 5S rRNA and tRNAs. The sequence is that of DNA-directed RNA polymerase III subunit rpc3 (rpc82) from Neosartorya fischeri (strain ATCC 1020 / DSM 3700 / CBS 544.65 / FGSC A1164 / JCM 1740 / NRRL 181 / WB 181) (Aspergillus fischerianus).